A 252-amino-acid chain; its full sequence is Floral homeotic protein AGAMOUS (252 aa).

Residues 19-73 (RGKIEIKRIENTTNRQVTFCKRRNGLLKKAYELSVLCDAEVALIVFSSRGRLYEY) form the MADS-box domain. One can recognise a K-box domain in the interval 103–193 (AQYYQQESAK…RAKIAENERN (91 aa)).

It localises to the nucleus. In terms of biological role, probable transcription factor involved in regulating genes that determines stamen and carpel development in wild-type flowers. In Brassica napus (Rape), this protein is Floral homeotic protein AGAMOUS (AG1).